The chain runs to 160 residues: Cytochrome b6-f complex subunit 4 (160 aa).

3 helical membrane passes run 36-56 (LLYI…GLAV), 95-115 (LLGV…PFLE), and 131-151 (TVFL…TLPI).

This sequence belongs to the cytochrome b family. PetD subfamily. As to quaternary structure, the 4 large subunits of the cytochrome b6-f complex are cytochrome b6, subunit IV (17 kDa polypeptide, petD), cytochrome f and the Rieske protein, while the 4 small subunits are petG, petL, petM and petN. The complex functions as a dimer.

It is found in the plastid. The protein localises to the chloroplast thylakoid membrane. Its function is as follows. Component of the cytochrome b6-f complex, which mediates electron transfer between photosystem II (PSII) and photosystem I (PSI), cyclic electron flow around PSI, and state transitions. This chain is Cytochrome b6-f complex subunit 4, found in Solanum tuberosum (Potato).